We begin with the raw amino-acid sequence, 342 residues long: Antihemorrhagic factor HSF (342 aa).

An N-terminal signal peptide occupies residues 1–19 (MNSLVALVLLGQIIGSTLS). 2 Cystatin fetuin-A-type domains span residues 22–130 (VRGD…VKCH) and 141–254 (RNCS…SNCV). A Cell attachment site motif is present at residues 23–25 (RGD). The tract at residues 24–108 (GDLECDDKEA…RQQHNHAVEM (85 aa)) is indispensable for metalloproteinase inhibition. Cystine bridges form between C28-C332, C85-C96, C110-C129, C143-C146, C205-C217, and C230-C253. An N-linked (GlcNAc...) asparagine glycan is attached at N142. Residue N204 is glycosylated (N-linked (GlcNAc...) asparagine). N-linked (GlcNAc...) asparagine glycosylation occurs at N282.

Belongs to the fetuin family. In terms of processing, cys-63 may exist in a mixed disulfide form with a thiol compound such as glutathione. In terms of tissue distribution, expressed by the liver.

The protein localises to the secreted. Functionally, inhibits hemorrhagic and proteolytic activities of metalloproteinases (HR1A, HR1B, HR2a, HR2b and H2 proteinase from T.flavodidis and brevilysins H3, H4, H6 and L4 from A.halys brevicaudus). Has no effect on brevilysins H2. Has no effect on papain and cathepsin-B. This is Antihemorrhagic factor HSF from Protobothrops flavoviridis (Habu).